A 241-amino-acid chain; its full sequence is Pyridoxine 5'-phosphate synthase (241 aa).

N7 contacts 3-amino-2-oxopropyl phosphate. Residue 9–10 (DH) coordinates 1-deoxy-D-xylulose 5-phosphate. R18 provides a ligand contact to 3-amino-2-oxopropyl phosphate. H43 acts as the Proton acceptor in catalysis. 1-deoxy-D-xylulose 5-phosphate contacts are provided by R45 and H50. Catalysis depends on E70, which acts as the Proton acceptor. T100 is a 1-deoxy-D-xylulose 5-phosphate binding site. H191 (proton donor) is an active-site residue. 3-amino-2-oxopropyl phosphate-binding positions include G192 and 213-214 (GH).

This sequence belongs to the PNP synthase family. In terms of assembly, homooctamer; tetramer of dimers.

The protein resides in the cytoplasm. It catalyses the reaction 3-amino-2-oxopropyl phosphate + 1-deoxy-D-xylulose 5-phosphate = pyridoxine 5'-phosphate + phosphate + 2 H2O + H(+). It participates in cofactor biosynthesis; pyridoxine 5'-phosphate biosynthesis; pyridoxine 5'-phosphate from D-erythrose 4-phosphate: step 5/5. Functionally, catalyzes the complicated ring closure reaction between the two acyclic compounds 1-deoxy-D-xylulose-5-phosphate (DXP) and 3-amino-2-oxopropyl phosphate (1-amino-acetone-3-phosphate or AAP) to form pyridoxine 5'-phosphate (PNP) and inorganic phosphate. In Acidithiobacillus ferrooxidans (strain ATCC 23270 / DSM 14882 / CIP 104768 / NCIMB 8455) (Ferrobacillus ferrooxidans (strain ATCC 23270)), this protein is Pyridoxine 5'-phosphate synthase.